The chain runs to 184 residues: MIALPPQPDLDLASLVRTIPDFPRPGIQFRDITTLIGDAVGFAESVRRLSACAAAYRPDLIVAVEARGFLFGAAMATAMGLGVVPVRKAGKLPGVTIGVDYELEYGTDRLELHEGAVLPGHRVVLVDDLLATGGTILATAALMRSVGAEVAAALFVIDLPDLGGSARLGAAGLRCETLIAFNGD.

The protein belongs to the purine/pyrimidine phosphoribosyltransferase family. As to quaternary structure, homodimer.

The protein resides in the cytoplasm. The catalysed reaction is AMP + diphosphate = 5-phospho-alpha-D-ribose 1-diphosphate + adenine. It functions in the pathway purine metabolism; AMP biosynthesis via salvage pathway; AMP from adenine: step 1/1. Catalyzes a salvage reaction resulting in the formation of AMP, that is energically less costly than de novo synthesis. This chain is Adenine phosphoribosyltransferase, found in Sphingopyxis alaskensis (strain DSM 13593 / LMG 18877 / RB2256) (Sphingomonas alaskensis).